Reading from the N-terminus, the 1276-residue chain is Sterol regulatory element-binding protein cleavage-activating protein (1276 aa).

Residues 1 to 18 lie on the Cytoplasmic side of the membrane; that stretch reads MTLTERLREKISQAFYNH. Residues 19-39 traverse the membrane as a helical segment; that stretch reads GLLCASYPIPIILFTGLCILA. Residues 40 to 279 are Lumenal-facing; sequence CCYPLLKLPL…NLVHVHFKEE (240 aa). The interval 46–284 is loop-1; that stretch reads KLPLPGTGPV…HFKEEIGIAE (239 aa). A disordered region spans residues 60-81; that stretch reads PVKDYSPPPVDSDHKQGEPSEQ. N263 is a glycosylation site (N-linked (GlcNAc...) asparagine). The helical transmembrane segment at 280-300 threads the bilayer; it reads IGIAELIPLVTTYIILFAYIY. In terms of domain architecture, SSD spans 284–442; it reads ELIPLVTTYI…MFFFTTVLSI (159 aa). The Cytoplasmic segment spans residues 301–312; it reads FSTRKIDMVKSK. A helical transmembrane segment spans residues 313–333; that stretch reads WGLALAAVVTVLSSLLMSVGL. Residues 334–344 are Lumenal-facing; that stretch reads CTLFGLTPTLN. The helical transmembrane segment at 345–365 threads the bilayer; sequence GGEIFPYLVVVIGLENVLVLT. Over 366 to 401 the chain is Cytoplasmic; it reads KSVVSTPVDLEVKLRIAQGLSSESWSIMKNVATELG. The helical transmembrane segment at 402-422 threads the bilayer; it reads IILIGYFTLVPAIQEFCLFAV. Position 423 (V423) is a topological domain, lumenal. Residues 424 to 444 form a helical membrane-spanning segment; the sequence is GLVSDFFLQMFFFTTVLSIDI. Topologically, residues 445–518 are cytoplasmic; the sequence is RRMELADLNK…FLARTRLAQR (74 aa). The short motif at 447 to 452 is the ER export signal element; that stretch reads MELADL. Residues K454 and K466 each participate in a glycyl lysine isopeptide (Lys-Gly) (interchain with G-Cter in ubiquitin) cross-link. Residues 519–539 form a helical membrane-spanning segment; that stretch reads LIMAGTVVWIGILVYTDPAGL. The interval 535–710 is loop-7; the sequence is DPAGLRTYLA…QAHGDITLYK (176 aa). Over 540 to 708 the chain is Lumenal; that stretch reads RTYLAAQVTE…GTQAHGDITL (169 aa). N-linked (GlcNAc...) asparagine glycans are attached at residues N590 and N641. Residues 709–729 form a helical membrane-spanning segment; it reads YKVAALGLAAGIVLVLLLLCL. Residues 730–1276 are Cytoplasmic-facing; it reads YRVLCPRNYG…YVPSVLEKLD (547 aa). Residues 731–1276 are interaction with SREBF2; that stretch reads RVLCPRNYGQ…YVPSVLEKLD (546 aa). A WD 1 repeat occupies 771-811; sequence VLRGHLMDIECLASDGMLLVSCCLAGQVCVWDAQTGDCLTR. The interval 816 to 903 is disordered; it reads GSRRDSCGGG…RHRAGCGRAR (88 aa). A phosphoserine mark is found at S821, S837, S843, S850, S905, and S934. The segment at 928 to 957 is disordered; the sequence is PALRPPSPGSPLPQASQEDGAAPEKGSPPL. WD repeat units follow at residues 949–999 and 1002–1039; these read APEK…LCCS and EVSS…SLSP. An Omega-N-methylarginine modification is found at R1048. WD repeat units lie at residues 1074-1111, 1114-1152, 1155-1192, and 1194-1232; these read AHQK…CLFT, GHSG…RVSH, AHRG…KLYS, and QQDL…LLQT.

It belongs to the WD repeat SCAP family. Membrane region forms a homotetramer. Component of the SCAP-SREBP complex (composed of SCAP and SREBF1/SREBP1 or SREBF2/SREBP2); interacts with SREBF1/SREBP1 or SREBF2/SREBP2 through its C-terminal cytoplasmic domain. Forms a ternary complex with INSIG1 or INSIG2 through its transmembrane domains at high sterol concentrations. Interacts with PAQR3; the interaction anchors the SCAP-SREBP complex to the Golgi apparatus in low cholesterol conditions. Interacts with the SEC23-SEC24 complex in a SAR1-GTP-dependent manner through an ER export signal in its third cytoplasmic loop. Interacts with RNF139; the interaction inhibits the interaction of SCAP with SEC24B and hampering the ER to Golgi transport of the SCAP-SREBP complex. Interacts with SPRING. Ubiquitinated at Lys-454 and Lys-466. RNF145 triggers ubiquitination of SCAP, likely inhibiting SCAP-SREBP complex transport to the Golgi apparatus and the subsequent processing/maturation of SREBF2/SREBP2.

Its subcellular location is the endoplasmic reticulum membrane. It is found in the golgi apparatus membrane. The protein localises to the cytoplasmic vesicle. It localises to the COPII-coated vesicle membrane. Functionally, escort protein required for cholesterol as well as lipid homeostasis. Regulates export of the SCAP-SREBP complex from the endoplasmic reticulum to the Golgi upon low cholesterol, thereby regulating the processing of sterol regulatory element-binding proteins (SREBPs) SREBF1/SREBP1 and SREBF2/SREBP2. At high sterol concentrations, formation of a ternary complex with INSIG (INSIG1 or INSIG2) leads to mask the ER export signal in SCAP, promoting retention of the complex in the endoplasmic reticulum. Low sterol concentrations trigger release of INSIG, a conformational change in the SSD domain of SCAP, unmasking of the ER export signal, promoting recruitment into COPII-coated vesicles and transport of the SCAP-SREBP to the Golgi: in the Golgi, SREBPs are then processed, releasing the transcription factor fragment of SREBPs from the membrane, its import into the nucleus and up-regulation of LDLR, INSIG1 and the mevalonate pathway. Binds cholesterol via its SSD domain. The chain is Sterol regulatory element-binding protein cleavage-activating protein from Cricetulus griseus (Chinese hamster).